The following is an 860-amino-acid chain: Glucans biosynthesis glucosyltransferase H (860 aa).

Transmembrane regions (helical) follow at residues 146–166 (ILLI…KGIL), 200–220 (ILLL…TALM), 519–539 (VFLT…FLVL), 576–596 (LFST…ILIW), 610–630 (TVSM…RMLF), and 686–706 (FLWW…VSVI).

This sequence belongs to the glycosyltransferase 2 family. OpgH subfamily.

The protein localises to the cell inner membrane. It functions in the pathway glycan metabolism; osmoregulated periplasmic glucan (OPG) biosynthesis. Involved in the biosynthesis of osmoregulated periplasmic glucans (OPGs). This Pseudomonas syringae pv. syringae (strain B728a) protein is Glucans biosynthesis glucosyltransferase H.